Here is a 64-residue protein sequence, read N- to C-terminus: Beta-defensin 13 (64 aa).

Residues Met-1 to Gly-22 form the signal peptide. Disulfide bonds link Cys-30-Cys-57, Cys-37-Cys-51, and Cys-41-Cys-58.

This sequence belongs to the beta-defensin family. Expressed in testis and to a lesser extent in epididymis (caput, corpus and cauda). Also weakly expressed in kidneys.

The protein localises to the secreted. Has antibacterial activity. In Mus musculus (Mouse), this protein is Beta-defensin 13 (Defb13).